A 244-amino-acid polypeptide reads, in one-letter code: L-xylulose reductase (244 aa).

An N-acetylmethionine modification is found at Met-1. 11–39 (LVTGAGKGIGRSIVKALHAAGARVVAVSR) contacts NADP(+). Arg-21 carries the omega-N-methylarginine modification. The residue at position 46 (Ser-46) is a Phosphoserine. A substrate-binding site is contributed by Ser-136. The active-site Proton acceptor is Tyr-149. Lys-153 is a catalytic residue.

Belongs to the short-chain dehydrogenases/reductases (SDR) family. As to quaternary structure, homotetramer.

The protein resides in the membrane. The enzyme catalyses xylitol + NADP(+) = L-xylulose + NADPH + H(+). Catalyzes the NADPH-dependent reduction of several pentoses, tetroses, trioses, alpha-dicarbonyl compounds and L-xylulose. Participates in the uronate cycle of glucose metabolism. May play a role in the water absorption and cellular osmoregulation in the proximal renal tubules by producing xylitol, an osmolyte, thereby preventing osmolytic stress from occurring in the renal tubules. The chain is L-xylulose reductase (DCXR) from Bos taurus (Bovine).